Here is a 147-residue protein sequence, read N- to C-terminus: Epididymal secretory protein E3-beta (147 aa).

Residues 1 to 25 form the signal peptide; that stretch reads MASSLKIWGTLLALLCILCTLLVQS.

In terms of tissue distribution, epididymis.

The protein resides in the secreted. Its function is as follows. Possible function in sperm maturation. The protein is Epididymal secretory protein E3-beta (EDDM3B) of Homo sapiens (Human).